The chain runs to 510 residues: NAD(P)H-quinone oxidoreductase subunit 2, chloroplastic (510 aa).

12 helical membrane passes run 24-44 (LLLFHGSFIFPECILIFGLIL), 59-79 (WFYFISSTSLVMSITALFFRW), 99-119 (IFQFLILLCSTLCIPLSVEYI), 124-144 (MAITEFLLFVLTATLGGMFLC), 149-169 (LITIFVAPECFSLCSYLLSGY), 184-204 (LLMGGASSSILVHGLSWLYGL), 229-249 (ISIALISITVGIGFKLSPAPF), 295-315 (WHLLLEILAILSMILGNLIAL), 323-343 (MLAYSSIGQIGYVIIGIIVGD), 354-374 (YMLFYISMNLGTFACIVSFGL), 395-415 (ALSSALCLLSLGGLPPLAGFF), and 418-438 (LYLFWCGWQAGLYFLVSIGLL).

It belongs to the complex I subunit 2 family. In terms of assembly, NDH is composed of at least 16 different subunits, 5 of which are encoded in the nucleus.

The protein resides in the plastid. It is found in the chloroplast thylakoid membrane. It carries out the reaction a plastoquinone + NADH + (n+1) H(+)(in) = a plastoquinol + NAD(+) + n H(+)(out). It catalyses the reaction a plastoquinone + NADPH + (n+1) H(+)(in) = a plastoquinol + NADP(+) + n H(+)(out). NDH shuttles electrons from NAD(P)H:plastoquinone, via FMN and iron-sulfur (Fe-S) centers, to quinones in the photosynthetic chain and possibly in a chloroplast respiratory chain. The immediate electron acceptor for the enzyme in this species is believed to be plastoquinone. Couples the redox reaction to proton translocation, and thus conserves the redox energy in a proton gradient. This is NAD(P)H-quinone oxidoreductase subunit 2, chloroplastic from Coelogyne cristata (Orchid).